Reading from the N-terminus, the 138-residue chain is Cyclin-dependent kinase 4 inhibitor B (138 aa).

Residues Gly-13–Asp-39 form an ANK 1; truncated repeat. ANK repeat units follow at residues Phe-46–Cys-74, Thr-79–Val-108, and Trp-112–Asp-138.

Belongs to the CDKN2 cyclin-dependent kinase inhibitor family. As to quaternary structure, heterodimer of CDKN2B with CDK4 or CDK6. Isoform 2 does not interact with CDK4 nor CDK6. In terms of tissue distribution, isoform 2 is expressed in normal (keratinocytes, fibroblasts) and tumor cell lines.

The protein localises to the cytoplasm. Interacts strongly with CDK4 and CDK6. Potent inhibitor. Potential effector of TGF-beta induced cell cycle arrest. The chain is Cyclin-dependent kinase 4 inhibitor B (CDKN2B) from Homo sapiens (Human).